The primary structure comprises 221 residues: Glutathione S-transferase A3 (221 aa).

A2 carries the N-acetylalanine modification. The 81-residue stretch at 3 to 83 (GKPVLHYFDG…YIASKYNLYG (81 aa)) folds into the GST N-terminal domain. N6-succinyllysine is present on K4. Glutathione contacts are provided by residues Y9, R45, 54–55 (QV), and 67–68 (QT). The GST C-terminal domain occupies 85–207 (DMKERAIIDM…LQPGSQRKPF (123 aa)).

In terms of assembly, homodimer.

Its subcellular location is the cytoplasm. It catalyses the reaction RX + glutathione = an S-substituted glutathione + a halide anion + H(+). The catalysed reaction is androst-5-ene-3,17-dione = androst-4-ene-3,17-dione. The enzyme catalyses pregn-5-ene-3,20-dione = progesterone. Functionally, conjugation of reduced glutathione to a wide number of exogenous and endogenous hydrophobic electrophiles. Catalyzes isomerization reactions that contribute to the biosynthesis of steroid hormones. Efficiently catalyze obligatory double-bond isomerizations of delta(5)-androstene-3,17-dione and delta(5)-pregnene-3,20-dione, precursors to testosterone and progesterone, respectively. Has a high catalytic activity for aflatoxin B1-8,9 epoxide. This is Glutathione S-transferase A3 from Mus musculus (Mouse).